A 1190-amino-acid chain; its full sequence is ATPase histone chaperone abo1 (1190 aa).

Residues 1–11 (MKEEASEHGGS) are compositionally biased toward basic and acidic residues. Disordered regions lie at residues 1–185 (MKEE…RKTH) and 204–253 (YIDS…DLAD). Composition is skewed to acidic residues over residues 52-62 (QEDEGDEDWEE) and 82-106 (SEGD…DSED). The segment covering 112 to 131 (VRSKPKYKPGTRRSTRLRNR) has biased composition (basic residues). Over residues 141–152 (EEHRPILRERTS) the composition is skewed to basic and acidic residues. 309–314 (PGTGKT) contacts ATP. Residues 794 to 922 (RLLNKLKIKL…ANVLLGVEDM (129 aa)) enclose the Bromo domain.

This sequence belongs to the AAA ATPase family. In terms of assembly, homohexamer. Interacts with the FACT complex subunits spt16 and pob3. Interacts with histone H3-H4 (via N-terminus).

It localises to the nucleus. The protein localises to the chromosome. It catalyses the reaction ATP + H2O = ADP + phosphate + H(+). In terms of biological role, ATPase histone chaperone which facilitates loading of histone H3-H4 onto DNA in an ATP-dependent manner. Plays a genome-wide role in nucleosome organization and establishment of chromatin. Also plays a role in heterochromatin assembly by stabilizing recruitment of the histone methyltransferase clr4 to methylated histone H3, to promote the transition from H3K9me2 to H3K9me3. This chain is ATPase histone chaperone abo1, found in Schizosaccharomyces pombe (strain 972 / ATCC 24843) (Fission yeast).